A 366-amino-acid polypeptide reads, in one-letter code: Phospho-N-acetylmuramoyl-pentapeptide-transferase (366 aa).

Transmembrane regions (helical) follow at residues 27–47, 71–91, 93–113, 134–154, 174–194, 205–225, 245–265, 268–288, 297–317, and 343–363; these read AALF…ISSL, TPTM…LLWA, LSSI…AIGF, LGIE…AAQS, LMLN…VGAG, GLAI…AYLA, LAVI…FNAP, AIFM…TVAV, VIIG…VFWF, and QVVI…LSTL.

Belongs to the glycosyltransferase 4 family. MraY subfamily. Requires Mg(2+) as cofactor.

It is found in the cell inner membrane. It carries out the reaction UDP-N-acetyl-alpha-D-muramoyl-L-alanyl-gamma-D-glutamyl-meso-2,6-diaminopimeloyl-D-alanyl-D-alanine + di-trans,octa-cis-undecaprenyl phosphate = di-trans,octa-cis-undecaprenyl diphospho-N-acetyl-alpha-D-muramoyl-L-alanyl-D-glutamyl-meso-2,6-diaminopimeloyl-D-alanyl-D-alanine + UMP. Its pathway is cell wall biogenesis; peptidoglycan biosynthesis. Catalyzes the initial step of the lipid cycle reactions in the biosynthesis of the cell wall peptidoglycan: transfers peptidoglycan precursor phospho-MurNAc-pentapeptide from UDP-MurNAc-pentapeptide onto the lipid carrier undecaprenyl phosphate, yielding undecaprenyl-pyrophosphoryl-MurNAc-pentapeptide, known as lipid I. The chain is Phospho-N-acetylmuramoyl-pentapeptide-transferase from Sinorhizobium fredii (strain NBRC 101917 / NGR234).